A 285-amino-acid chain; its full sequence is MSTPENMAWPAPAKLNLFLHVNGRRSDGYHELQTLFIFLDHCDWLRFHINNSDLVDIKPALADVPPEQNLIYRAAMLLKQYSTQPLGVMVELDKRLPMGGGIGGGSSDAATTLVALNYLWKINLPVDELAELGRQLGADVPVFVRGHAAFAEGVGEKLLPVEVTQKWYLVLVPECHVSTAEIFRHKDLKRDTPKQNWRELQQGNWHNDCEPLVKKNYPEVEKALRWLIEYAPSRMTGTGACVFAEFKHEHEAREVLALIPTWLRGFVARGENLSPLHVVLQQVYA.

Residue K14 is part of the active site. Residue 97-107 (PMGGGIGGGSS) participates in ATP binding. D139 is an active-site residue.

It belongs to the GHMP kinase family. IspE subfamily.

The enzyme catalyses 4-CDP-2-C-methyl-D-erythritol + ATP = 4-CDP-2-C-methyl-D-erythritol 2-phosphate + ADP + H(+). Its pathway is isoprenoid biosynthesis; isopentenyl diphosphate biosynthesis via DXP pathway; isopentenyl diphosphate from 1-deoxy-D-xylulose 5-phosphate: step 3/6. Catalyzes the phosphorylation of the position 2 hydroxy group of 4-diphosphocytidyl-2C-methyl-D-erythritol. The protein is 4-diphosphocytidyl-2-C-methyl-D-erythritol kinase of Tolumonas auensis (strain DSM 9187 / NBRC 110442 / TA 4).